We begin with the raw amino-acid sequence, 143 residues long: Putative pre-16S rRNA nuclease (143 aa).

This sequence belongs to the YqgF nuclease family.

The protein resides in the cytoplasm. Its function is as follows. Could be a nuclease involved in processing of the 5'-end of pre-16S rRNA. The chain is Putative pre-16S rRNA nuclease from Leuconostoc mesenteroides subsp. mesenteroides (strain ATCC 8293 / DSM 20343 / BCRC 11652 / CCM 1803 / JCM 6124 / NCDO 523 / NBRC 100496 / NCIMB 8023 / NCTC 12954 / NRRL B-1118 / 37Y).